Consider the following 252-residue polypeptide: Major prion protein (252 aa).

The signal sequence occupies residues 1-22 (MANLGCWMLFLFVATWSDLGLC). The interaction with ADGRG6 stretch occupies residues 23–38 (KKRPKPGGWNTGGSRY). The tract at residues 23-229 (KKRPKPGGWN…ESQAYYQRGS (207 aa)) is interaction with GRB2, ERI3 and SYN1. Residues 26 to 106 (PKPGGWNTGG…QWNKPSKPKT (81 aa)) are disordered. A run of 5 repeats spans residues 51-58 (PQGGGWGQ), 59-66 (PHGGGWGQ), 67-74 (PHGGGWGQ), 75-82 (PHGGGWGQ), and 83-90 (PHGGGWGQ). The tract at residues 51-90 (PQGGGWGQPHGGGWGQPHGGGWGQPHGGGWGQPHGGGWGQ) is 5 X 8 AA tandem repeats of P-H-G-G-G-W-G-Q. Over residues 52–94 (QGGGWGQPHGGGWGQPHGGGWGQPHGGGWGQPHGGGWGQGGGT) the composition is skewed to gly residues. The Cu(2+) site is built by histidine 60, glycine 61, glycine 62, histidine 68, glycine 69, glycine 70, histidine 76, glycine 77, glycine 78, histidine 84, glycine 85, and glycine 86. Cysteine 178 and cysteine 213 are oxidised to a cystine. Asparagine 180 and asparagine 196 each carry an N-linked (GlcNAc...) asparagine glycan. Residue serine 229 is the site of GPI-anchor amidated serine attachment. The propeptide at 230–252 (SMVLFSSPPVILLISFLIFLIVG) is removed in mature form.

Belongs to the prion family. In terms of assembly, monomer and homodimer. Has a tendency to aggregate into amyloid fibrils containing a cross-beta spine, formed by a steric zipper of superposed beta-strands. Soluble oligomers may represent an intermediate stage on the path to fibril formation. Copper binding may promote oligomerization. Interacts with GRB2, APP, ERI3/PRNPIP and SYN1. Mislocalized cytosolically exposed PrP interacts with MGRN1; this interaction alters MGRN1 subcellular location and causes lysosomal enlargement. Interacts with APP. Interacts with KIAA1191. Interacts with ADGRG6.

The protein resides in the cell membrane. The protein localises to the golgi apparatus. Functionally, its primary physiological function is unclear. May play a role in neuronal development and synaptic plasticity. May be required for neuronal myelin sheath maintenance. May promote myelin homeostasis through acting as an agonist for ADGRG6 receptor. May play a role in iron uptake and iron homeostasis. Soluble oligomers are toxic to cultured neuroblastoma cells and induce apoptosis (in vitro). Association with GPC1 (via its heparan sulfate chains) targets PRNP to lipid rafts. Also provides Cu(2+) or Zn(2+) for the ascorbate-mediated GPC1 deaminase degradation of its heparan sulfate side chains. This Callithrix jacchus (White-tufted-ear marmoset) protein is Major prion protein (PRNP).